The following is a 609-amino-acid chain: Glutamine--fructose-6-phosphate aminotransferase [isomerizing] (609 aa).

Cys-2 functions as the Nucleophile; for GATase activity in the catalytic mechanism. The region spanning 2–217 is the Glutamine amidotransferase type-2 domain; sequence CGIVGAIAGR…DGDTAEIRRD (216 aa). SIS domains are found at residues 285-425 and 458-599; these read AESV…LRGA and WAEC…VDKP. Lys-604 functions as the For Fru-6P isomerization activity in the catalytic mechanism.

In terms of assembly, homodimer.

Its subcellular location is the cytoplasm. It carries out the reaction D-fructose 6-phosphate + L-glutamine = D-glucosamine 6-phosphate + L-glutamate. Its function is as follows. Catalyzes the first step in hexosamine metabolism, converting fructose-6P into glucosamine-6P using glutamine as a nitrogen source. The polypeptide is Glutamine--fructose-6-phosphate aminotransferase [isomerizing] (Xylella fastidiosa (strain 9a5c)).